The sequence spans 318 residues: NAC domain-containing protein 59 (318 aa).

The NAC domain occupies 24 to 174 (LPPGFRFHPT…ECVISRVFHT (151 aa)). A DNA-binding region spans residues 121 to 180 (VGMKKTLVFYKGRAPKGVKTNWVMHEYRLEGKFAIDNLSKTAKNECVISRVFHTRTDGTK).

As to expression, mostly expressed in root cortex, phloem, atrichoblast and quiescent center (QC), and, to a lower extent, in root endodermis, xylem, pericycle, columella and lateral root cap (LRC). Expressed in roots, cotyledons, very young leaves, senescing leaves, mature flowers and pollen.

It is found in the nucleus. Its function is as follows. Transcription activator that binds to DNA in promoters of target genes on a specific bipartite motif 5'-[AG]CGT[AG](4-5n)[AG][CT]ACGCAA-3'. Triggers the expression of senescence-associated genes during age-, salt- and dark-induced senescence through a regulatory network that may involve cross-talk with salt- and H(2)O(2)-dependent signaling pathways. The protein is NAC domain-containing protein 59 of Arabidopsis thaliana (Mouse-ear cress).